Here is a 2410-residue protein sequence, read N- to C-terminus: MNSKNDLFIGFFFFFYNYYYYYNNNNNNNNNNNNNNNNNNNNNNNNNNNNNNIYIIVIIGLDPQQNHPSLKIPPPPSPTSPYVRRHARQHSRSNSSNSPGELTGGVEIIQQQNSINTQTSPPTSTSPNTVPPPPPTNTTTSSTTITRNSNNINNSNGGIINSSSGSNINNSSSSGVINTNINNSGGNISPTSNSLPSSNNNILYTSSGSNSGNNNNNNNTINISSGSSGINNSSNSNINNNNNNNSSSSSGIHASGSLTAIPTNTNSNSSIFHSSNSVNRINKSNYSADSLVLPPNRISQVPQSQTQPQLQISPSTSFSSQQQQQQQLQQQLQLQQQLQQQIQQQQQIQQQQNLHFTYSKTFTSGQPNTLVNLSSPPPQSKHLHVSSDHSFFNEVLTPTPVIHNSTNQNNQLLFGDSDPLSFLEYNNFINRYQPALKNNQPVSSYRQQQQIQHQIQLQQIQQQQQQQQQIQQQQLQQQQQIQQQQIQQQQQQIQQQQQQQQQQQQQQQQLQQIQPPPTIQPPPQQTTPTLRGNRSSGNLSGLNSFSLKQSTDSLTPPPNSQQSTVSSNSTPIAATPISPLTAPTSPPPPPPPPTNFNSKFNNNNNNNINNSSNNNTTVPPSPPPIIVLPKSPSSRSPRPASAPVPSAPFLVNNRVINTSSSSNISTNNTDLNLSSSSSSSPPLNISTASPSKSEDSPPTVSPSYKQQQQQQQQQQQQQQQLNNSSNSSYSPKPRSPSVSSPPPSSISPNSSPIGSPNISFHHHQQHQIPPPPPVLSNTNNNNNNNNNNNNNNNNNNNNNNNNNNNNNNNNNTNHTNKKEGDSSWFNMSFKFFKKKLVPSNEYRWDLRKSNSLTLNIEDKSRCSYRLPTSGSKGIAKSTQPFSSSFTYFELFITNGNGDKICFGLTTNDHPIEVYPGNYQGSYGYSGDGKCYFGTNEGRVYGPSFSSGDVVGCGYDSSSKTLYFTKNGVYLGVAAQKVNLIGLYPTVGLQNPGESVVINFFGPFSYRGAPEKPSKQSTIKDSGGSSIIPSEDLIPKEEFEVCRWSEKKNYHGKHVVVRNRTAFLPLDSPKDTIGGVRATQPFGEGFCYFEVIIDQLDKGQLSIGLANLEYPTFYHVGWMPRSYGYHNDDGRKFRWREEPGVNEGESYGSSYKKGDIIGCGLSFTSREIFFTKNGMYLGTAFSNVYGVFYPSVAFNEPGISITGVFGPPFKFSQVTLMLKNVNSTSILVPNGNNNNNSNNNNNNNNNNIIGNGKITTTTTTSTSPSSINNNEDISSNNNNNNNNNNNNNNNNNNNNNNNNNNNNNNSNSSNTNNNNINNTTNNNNSNSNNNNNNNNSNSNSNSNNNNINNNNNNNNNNNNIYLTKKPSIGSTDESSTGSLGGNNSSGNNNSSSGSIGNNSSIIKQRSPPHSINGPLMLPPSSTNNNNNIYSSYNSTTAGSSTTILPTLNHPIFGNTTSNNNSSSTLSVGGNNNLLGRHCQSLPITASTNHTLSSSLGVSFSSPSSSPKTSPRKIVNSSEDLGFVQTFQDQDGQPPSAWRRCGKSIKTKDDITLTIIKKKTSVAMADRPFSSNSSSTICYFEVYLEGHDKKGSITVGLSHSTYPFIKHIGREPKSYGFSSEGEKYGGSEIGEPYGPFFFFDGDSIASSCVIGCGINTSTRDIFFTKNGHYLGVAFSRVTSDPLYPSISFRGVVGGLCVATFPGGHFRFNIEDLPGISPSVWTEALGPDRQGSGFKNWAPNDVAIWLESFNYGQYRKNFRDNNISGRHLEGITHAMLKNDLGIEPYGHREDIINRLNRMIQIWNDKSPDSYPKIAIDSSDKIRWPASGGSSGGINISGGVVIGSSSGSDDGITEISSSSKNIRPYKSYTQKEIEDRNRRSTISGGEKKNKYYIDNQMDPHQIGSMDSDGLLPDFGQGPPDEKNSSKTLSNEQIRYLQQRKDEPPIAISSTGNGGSVSSTGGSSGFLTFPSSNSLTHPPQRDKPTQEFTHLPPITSNYKGITNTGQPHKSFDQPLELFPRHSAFSNNGNNGNNNNNNNNNNIKANQQQQQQSSYQQSQTQQQQQHITSTSTSTTNKWIDPFGGWETQSSLSHPPSRPPPPPPPPPQLPVRSEYEIDFNELEFGQTIGKGFFGEVKRGYWRETDVAIKIIYRDQFKTKSSLVMFQNEVGILSKLRHPNVVQFLGACTAGGEDHHCIVTEWMGGGSLRQFLTDHFNLLEQNPHIRLKLALDIAKGMNYLHGWTPPILHRDLSSRNILLDHNIDPKNPVVSSRQDIKCKISDFGLSRLKMEQASQMTQSVGCIPYMAPEVFKGDSNSEKSDVYSYGMVLFELLTSDEPQQDMKPMKMAHLAAYESYRPPIPLTTSSKWKEILTQCWDSNPDSRPTFKQIIVHLKEMEDQGVSSFASVPVQTIDTGVYA.

6 disordered regions span residues 29–48, 66–103, 116–158, 187–252, 508–647, and 659–820; these read NNNN…NNNN, NHPS…GELT, NTQT…SNGG, NISP…SSGI, QQLQ…VPSA, and SSSS…KKEG. Composition is skewed to low complexity over residues 116 to 128 and 137 to 158; these read NTQT…TSPN and NTTT…SNGG. The segment covering 514-525 has biased composition (pro residues); that stretch reads QPPPTIQPPPQQ. A compositionally biased stretch (low complexity) spans 530–544; that stretch reads LRGNRSSGNLSGLNS. Positions 545–554 are enriched in polar residues; that stretch reads FSLKQSTDSL. Low complexity predominate over residues 560 to 583; it reads SQQSTVSSNSTPIAATPISPLTAP. Positions 584–594 are enriched in pro residues; that stretch reads TSPPPPPPPPT. Low complexity-rich tracts occupy residues 595–618, 627–639, 659–686, 701–738, 746–759, and 777–813; these read NFNS…NTTV, VLPK…SPRP, SSSS…LNIS, SPSY…SPSV, ISPN…PNIS, and NTNN…NNTN. 2 consecutive B30.2/SPRY domains span residues 822–1004 and 1020–1209; these read SSWF…GPFS and DSGG…PPFK. Disordered regions lie at residues 1228–1428 and 1493–1512; these read PNGN…NNIY and SLGV…PRKI. Low complexity-rich tracts occupy residues 1229 to 1359, 1373 to 1399, 1419 to 1428, and 1493 to 1507; these read NGNN…NNNI, SSTG…NNSS, SSTNNNNNIY, and SLGV…SPKT. Residues 1481–1703 enclose the B30.2/SPRY 3 domain; that stretch reads PITASTNHTL…CVATFPGGHF (223 aa). Residues 1734-1798 enclose the SAM domain; the sequence is WAPNDVAIWL…INRLNRMIQI (65 aa). Residues 1862–2105 form a disordered region; the sequence is KSYTQKEIED…PPPPPQLPVR (244 aa). The span at 1865–1874 shows a compositional bias: basic and acidic residues; the sequence is TQKEIEDRNR. Low complexity predominate over residues 1951–1967; it reads SVSSTGGSSGFLTFPSS. A compositionally biased stretch (polar residues) spans 1989–2002; sequence ITSNYKGITNTGQP. The segment covering 2020 to 2070 has biased composition (low complexity); that stretch reads SNNGNNGNNNNNNNNNNIKANQQQQQQSSYQQSQTQQQQQHITSTSTSTTN. A compositionally biased stretch (pro residues) spans 2089–2102; sequence PSRPPPPPPPPPQL. The region spanning 2115–2387 is the Protein kinase domain; that stretch reads LEFGQTIGKG…FKQIIVHLKE (273 aa). Residues 2121–2129 and K2142 contribute to the ATP site; that span reads IGKGFFGEV. D2243 serves as the catalytic Proton acceptor.

This sequence belongs to the protein kinase superfamily. TKL Tyr protein kinase family. In terms of processing, tyrosine kinase domain is capable of autophosphorylation, in vitro; however it is also autophosphorylated on serine and threonine residues.

The catalysed reaction is L-tyrosyl-[protein] + ATP = O-phospho-L-tyrosyl-[protein] + ADP + H(+). Functionally, essential for spore differentiation. The chain is Dual specificity protein kinase splA (splA) from Dictyostelium discoideum (Social amoeba).